The sequence spans 332 residues: Ketol-acid reductoisomerase (NAD(+)) (332 aa).

In terms of domain architecture, KARI N-terminal Rossmann spans 1–181; sequence MKIYYDQDAD…GATRAGVIQT (181 aa). NAD(+)-binding positions include 24-27, Ser-50, and 82-85; these read YGSQ and DEKQ. His-107 is a catalytic residue. Gly-133 serves as a coordination point for NAD(+). The 146-residue stretch at 182-327 folds into the KARI C-terminal knotted domain; the sequence is TFKEETETDL…ARLRGMMPWL (146 aa). Mg(2+) contacts are provided by Asp-190, Glu-194, Glu-226, and Glu-230. Ser-251 lines the substrate pocket.

This sequence belongs to the ketol-acid reductoisomerase family. Mg(2+) is required as a cofactor.

It catalyses the reaction (2R)-2,3-dihydroxy-3-methylbutanoate + NAD(+) = (2S)-2-acetolactate + NADH + H(+). The protein operates within amino-acid biosynthesis; L-isoleucine biosynthesis; L-isoleucine from 2-oxobutanoate: step 2/4. It participates in amino-acid biosynthesis; L-valine biosynthesis; L-valine from pyruvate: step 2/4. In terms of biological role, involved in the biosynthesis of branched-chain amino acids (BCAA). Catalyzes an alkyl-migration followed by a ketol-acid reduction of (S)-2-acetolactate (S2AL) to yield (R)-2,3-dihydroxy-isovalerate. In the isomerase reaction, S2AL is rearranged via a Mg-dependent methyl migration to produce 3-hydroxy-3-methyl-2-ketobutyrate (HMKB). In the reductase reaction, this 2-ketoacid undergoes a metal-dependent reduction by NADH to yield (R)-2,3-dihydroxy-isovalerate. The sequence is that of Ketol-acid reductoisomerase (NAD(+)) from Thermacetogenium phaeum (strain ATCC BAA-254 / DSM 26808 / PB).